The sequence spans 281 residues: Ribosomal RNA small subunit methyltransferase A (281 aa).

S-adenosyl-L-methionine contacts are provided by asparagine 36, leucine 38, glycine 63, glutamate 84, aspartate 109, and asparagine 127.

It belongs to the class I-like SAM-binding methyltransferase superfamily. rRNA adenine N(6)-methyltransferase family. RsmA subfamily.

It localises to the cytoplasm. The catalysed reaction is adenosine(1518)/adenosine(1519) in 16S rRNA + 4 S-adenosyl-L-methionine = N(6)-dimethyladenosine(1518)/N(6)-dimethyladenosine(1519) in 16S rRNA + 4 S-adenosyl-L-homocysteine + 4 H(+). Specifically dimethylates two adjacent adenosines (A1518 and A1519) in the loop of a conserved hairpin near the 3'-end of 16S rRNA in the 30S particle. May play a critical role in biogenesis of 30S subunits. The protein is Ribosomal RNA small subunit methyltransferase A of Borreliella burgdorferi (strain ATCC 35210 / DSM 4680 / CIP 102532 / B31) (Borrelia burgdorferi).